The primary structure comprises 158 residues: Siroheme decarboxylase beta subunit (158 aa).

This sequence belongs to the Ahb/Nir family. In terms of assembly, forms a heterodimer composed of AhbA and AhbB.

It carries out the reaction siroheme + 2 H(+) = 12,18-didecarboxysiroheme + 2 CO2. Its pathway is porphyrin-containing compound metabolism; protoheme biosynthesis. In terms of biological role, involved in siroheme-dependent heme b biosynthesis. Catalyzes the decarboxylation of siroheme into didecarboxysiroheme. This Oleidesulfovibrio alaskensis (strain ATCC BAA-1058 / DSM 17464 / G20) (Desulfovibrio alaskensis) protein is Siroheme decarboxylase beta subunit.